Here is a 163-residue protein sequence, read N- to C-terminus: Nucleotide-binding protein YajQ (163 aa).

It belongs to the YajQ family.

In terms of biological role, nucleotide-binding protein. This chain is Nucleotide-binding protein YajQ, found in Salmonella typhi.